The primary structure comprises 469 residues: MALLTHLLVCTFGMGSWVAINGLWVELPLLVTELPEGWYLPSYLTMVIQLANIGPLLVTLLHHFQPSCLSEVPIIFTVLAVGTVACALFAFLWNVTSWVLDGRHSIAFMVLTFFLALVDCTSSVTFLPFMSRLPACYLTTFFVGEGLSSLLPALVALAQGSGLTTCVNVTQPPDTTPSTATTGKTVFLQGANSTLGTDLTGTTRSAIHLESRYLPANFSPLVFFLLLSFMMACCLAAFFLLQRQPRPRESSIEDLLTSQVTLHSIRPREGDDLGPPDPGPSSKAQGLPEEKTASDHPAHLAFIYVLVAFVNALTNGVLPSVQTYSCLSYGPVAYHLSATLSSMANPLACFLSMFLPHRSLPFLGVLTVLGTGFGAYNMAMAVMSPCPLMQGHWAGEILIVASWVLFIGCLSYVKVMLGVILRDRSRSALVWCGAAVQLGSLLGALLMFPLVNVLRLFSSADFCSLQCSA.

Topologically, residues 1 to 6 (MALLTH) are cytoplasmic. Residues 7–27 (LLVCTFGMGSWVAINGLWVEL) traverse the membrane as a helical segment. The Extracellular portion of the chain corresponds to 28–43 (PLLVTELPEGWYLPSY). A helical membrane pass occupies residues 44 to 64 (LTMVIQLANIGPLLVTLLHHF). Topologically, residues 65 to 71 (QPSCLSE) are cytoplasmic. Residues 72–92 (VPIIFTVLAVGTVACALFAFL) traverse the membrane as a helical segment. Topologically, residues 93–105 (WNVTSWVLDGRHS) are extracellular. Residue Asn-94 is glycosylated (N-linked (GlcNAc...) asparagine). Residues 106–126 (IAFMVLTFFLALVDCTSSVTF) form a helical membrane-spanning segment. The Cytoplasmic portion of the chain corresponds to 127–137 (LPFMSRLPACY). The chain crosses the membrane as a helical span at residues 138–158 (LTTFFVGEGLSSLLPALVALA). Over 159–220 (QGSGLTTCVN…SRYLPANFSP (62 aa)) the chain is Extracellular. The N-linked (GlcNAc...) asparagine glycan is linked to Asn-168. Residues 221-241 (LVFFLLLSFMMACCLAAFFLL) traverse the membrane as a helical segment. Topologically, residues 242-297 (QRQPRPRESSIEDLLTSQVTLHSIRPREGDDLGPPDPGPSSKAQGLPEEKTASDHP) are cytoplasmic. Ser-251 carries the post-translational modification Phosphoserine. Positions 266–290 (RPREGDDLGPPDPGPSSKAQGLPEE) are disordered. Residues 298–318 (AHLAFIYVLVAFVNALTNGVL) traverse the membrane as a helical segment. At 319–335 (PSVQTYSCLSYGPVAYH) the chain is on the extracellular side. The helical transmembrane segment at 336–356 (LSATLSSMANPLACFLSMFLP) threads the bilayer. The Cytoplasmic segment spans residues 357 to 361 (HRSLP). Residues 362-382 (FLGVLTVLGTGFGAYNMAMAV) form a helical membrane-spanning segment. At 383 to 396 (MSPCPLMQGHWAGE) the chain is on the extracellular side. Residues 397 to 417 (ILIVASWVLFIGCLSYVKVML) form a helical membrane-spanning segment. At 418-427 (GVILRDRSRS) the chain is on the cytoplasmic side. A helical membrane pass occupies residues 428 to 448 (ALVWCGAAVQLGSLLGALLMF). Residues 449–469 (PLVNVLRLFSSADFCSLQCSA) are Extracellular-facing.

It belongs to the riboflavin transporter family.

It is found in the cell membrane. The enzyme catalyses riboflavin(in) = riboflavin(out). In terms of biological role, plasma membrane transporter mediating the uptake by cells of the water soluble vitamin B2/riboflavin that plays a key role in biochemical oxidation-reduction reactions of the carbohydrate, lipid, and amino acid metabolism. This is Solute carrier family 52, riboflavin transporter, member 3 (SLC52A3) from Ailuropoda melanoleuca (Giant panda).